The sequence spans 518 residues: Serine/threonine-protein kinase PRR1 (518 aa).

Met1 is modified (N-acetylmethionine). Over residues 1–12 the composition is skewed to polar residues; it reads MDEYSSIYSQPK. The disordered stretch occupies residues 1–59; it reads MDEYSSIYSQPKTPRLKQEGFPDSIGDQHEKALIDENGEEDKKMASTEGTTGDSRSTPL. Over residues 16-45 the composition is skewed to basic and acidic residues; the sequence is LKQEGFPDSIGDQHEKALIDENGEEDKKMA. A compositionally biased stretch (polar residues) spans 47–59; sequence TEGTTGDSRSTPL. Ser132 is modified (phosphoserine). The Protein kinase domain occupies 192–508; it reads WKKVRPIGSG…INEIYESPFV (317 aa). ATP is bound by residues 198–206 and Lys225; that span reads IGSGNFSTV. The Proton acceptor role is filled by Asp354.

It belongs to the protein kinase superfamily. CAMK Ser/Thr protein kinase family. NIM1 subfamily.

Its subcellular location is the cytoplasm. The enzyme catalyses L-seryl-[protein] + ATP = O-phospho-L-seryl-[protein] + ADP + H(+). The catalysed reaction is L-threonyl-[protein] + ATP = O-phospho-L-threonyl-[protein] + ADP + H(+). In terms of biological role, protein kinase that functions as a regulator in the pheromone-induced mating pathway downstream of mitogen-activated protein kinase (MAPK) FUS3. Diminishes transcriptional induction of genes in response to pheromone signaling. The protein is Serine/threonine-protein kinase PRR1 (PRR1) of Saccharomyces cerevisiae (strain ATCC 204508 / S288c) (Baker's yeast).